A 557-amino-acid polypeptide reads, in one-letter code: Dihydroxy-acid dehydratase (557 aa).

Mg(2+) is bound at residue Asp78. Cys119 lines the [2Fe-2S] cluster pocket. Residues Asp120 and Lys121 each contribute to the Mg(2+) site. Position 121 is an N6-carboxylysine (Lys121). Cys192 is a [2Fe-2S] cluster binding site. Mg(2+) is bound at residue Glu442. Ser468 (proton acceptor) is an active-site residue.

This sequence belongs to the IlvD/Edd family. Homodimer. [2Fe-2S] cluster serves as cofactor. It depends on Mg(2+) as a cofactor.

The enzyme catalyses (2R)-2,3-dihydroxy-3-methylbutanoate = 3-methyl-2-oxobutanoate + H2O. It catalyses the reaction (2R,3R)-2,3-dihydroxy-3-methylpentanoate = (S)-3-methyl-2-oxopentanoate + H2O. It participates in amino-acid biosynthesis; L-isoleucine biosynthesis; L-isoleucine from 2-oxobutanoate: step 3/4. The protein operates within amino-acid biosynthesis; L-valine biosynthesis; L-valine from pyruvate: step 3/4. Functions in the biosynthesis of branched-chain amino acids. Catalyzes the dehydration of (2R,3R)-2,3-dihydroxy-3-methylpentanoate (2,3-dihydroxy-3-methylvalerate) into 2-oxo-3-methylpentanoate (2-oxo-3-methylvalerate) and of (2R)-2,3-dihydroxy-3-methylbutanoate (2,3-dihydroxyisovalerate) into 2-oxo-3-methylbutanoate (2-oxoisovalerate), the penultimate precursor to L-isoleucine and L-valine, respectively. The protein is Dihydroxy-acid dehydratase of Bacillus cereus (strain G9842).